Reading from the N-terminus, the 589-residue chain is Vomeromodulin (589 aa).

An N-terminal signal peptide occupies residues 1 to 29 (MWVLQALAIMLSIQAGVLDLVEVPPVVRS). Disordered regions lie at residues 49 to 71 (GLND…SRGG) and 146 to 170 (LLGK…GLGQ). Residues Asn-419 and Asn-437 are each glycosylated (N-linked (GlcNAc...) asparagine).

Post-translationally, N-glycosylated. The N-glycans consist mainly of complex sialylated and fucosylated biantennary structures. In terms of tissue distribution, abundant in the lateral nasal glands. Also present in the posterior septal and vomeronasal glands.

Its subcellular location is the secreted. This chain is Vomeromodulin, found in Rattus norvegicus (Rat).